Here is a 348-residue protein sequence, read N- to C-terminus: Glycerol-1-phosphate dehydrogenase [NAD(P)+] (348 aa).

Residues 94–98 and 116–119 contribute to the NAD(+) site; these read GKPID and TAAS. Asp-121 is a substrate binding site. Residue Ser-125 participates in NAD(+) binding. Asp-168 serves as a coordination point for substrate. 2 residues coordinate Zn(2+): Asp-168 and His-248. His-252 serves as a coordination point for substrate. Residue His-264 coordinates Zn(2+).

The protein belongs to the glycerol-1-phosphate dehydrogenase family. Zn(2+) is required as a cofactor.

The protein resides in the cytoplasm. It carries out the reaction sn-glycerol 1-phosphate + NAD(+) = dihydroxyacetone phosphate + NADH + H(+). It catalyses the reaction sn-glycerol 1-phosphate + NADP(+) = dihydroxyacetone phosphate + NADPH + H(+). The protein operates within membrane lipid metabolism; glycerophospholipid metabolism. Catalyzes the NAD(P)H-dependent reduction of dihydroxyacetonephosphate (DHAP or glycerone phosphate) to glycerol 1-phosphate (G1P). The G1P thus generated is used as the glycerophosphate backbone of phospholipids in the cellular membranes of Archaea. The sequence is that of Glycerol-1-phosphate dehydrogenase [NAD(P)+] from Haloquadratum walsbyi (strain DSM 16790 / HBSQ001).